We begin with the raw amino-acid sequence, 794 residues long: LPS-assembly protein LptD (794 aa).

An N-terminal signal peptide occupies residues 1–31 (MPSHCSSLLCARFRLSSLAVIVALAASGVRA).

The protein belongs to the LptD family. Component of the lipopolysaccharide transport and assembly complex. Interacts with LptE and LptA.

It localises to the cell outer membrane. Together with LptE, is involved in the assembly of lipopolysaccharide (LPS) at the surface of the outer membrane. The sequence is that of LPS-assembly protein LptD from Marinobacter nauticus (strain ATCC 700491 / DSM 11845 / VT8) (Marinobacter aquaeolei).